The chain runs to 181 residues: UPF0228 protein MA_3117 (181 aa).

Belongs to the UPF0228 family.

The polypeptide is UPF0228 protein MA_3117 (Methanosarcina acetivorans (strain ATCC 35395 / DSM 2834 / JCM 12185 / C2A)).